Here is a 93-residue protein sequence, read N- to C-terminus: YcgL domain-containing protein Ssed_2518 (93 aa).

The 85-residue stretch at 1-85 (MICAVYKSRR…PKVNLLEQHK (85 aa)) folds into the YcgL domain.

The polypeptide is YcgL domain-containing protein Ssed_2518 (Shewanella sediminis (strain HAW-EB3)).